The following is a 702-amino-acid chain: Ribosomal RNA large subunit methyltransferase K/L (702 aa).

Residues 43 to 154 (LIYQSLMWSR…KETAHISLDL (112 aa)) enclose the THUMP domain.

It belongs to the methyltransferase superfamily. RlmKL family.

The protein resides in the cytoplasm. The catalysed reaction is guanosine(2445) in 23S rRNA + S-adenosyl-L-methionine = N(2)-methylguanosine(2445) in 23S rRNA + S-adenosyl-L-homocysteine + H(+). It carries out the reaction guanosine(2069) in 23S rRNA + S-adenosyl-L-methionine = N(2)-methylguanosine(2069) in 23S rRNA + S-adenosyl-L-homocysteine + H(+). In terms of biological role, specifically methylates the guanine in position 2445 (m2G2445) and the guanine in position 2069 (m7G2069) of 23S rRNA. This Enterobacter sp. (strain 638) protein is Ribosomal RNA large subunit methyltransferase K/L.